The chain runs to 186 residues: Protein C (186 aa).

The segment covering 1–15 has biased composition (polar residues); the sequence is MSKTDWNASGLSRPS. Residues 1-44 are disordered; sequence MSKTDWNASGLSRPSPSAHWPSRKLWQHGQKYQTTQDRSEPPAG.

Belongs to the morbillivirus protein C family. Interacts with the phosphoprotein (via C-terminus); this interaction allows C to associate with the ribonucleocapsid.

The protein localises to the host nucleus. It is found in the host cytoplasmic vesicle. Functionally, ribonucleocapsid-associated protein that interacts with the phosphoprotein (P), thereby increasing replication accuracy and processivity of the polymerase complex. The polypeptide is Protein C (P/V/C) (Homo sapiens (Human)).